Reading from the N-terminus, the 84-residue chain is Toxin NvePTx1 (84 aa).

The signal sequence occupies residues 1-21 (MFSARLVLVFAVVLCIQLCNA). Positions 22-34 (SWLDERAMTQEKR) are excised as a propeptide.

It belongs to the sea anemone type 5 potassium channel toxin family. Post-translationally, contains 4 disulfide bonds. In terms of tissue distribution, in unfertilized eggs and early post-fertilization stages, is expressed uniformly. In gastrulae, the expression becomes spatially-localized and seems to be absent from the oral and aboral poles. In planulae, the expression is clearly observed in the ectoderm in packed gland cells absent from the two body poles, and upon metamorphosis, the expression diminishes. There is two types of gland cells, one large and elongated and another small and round. This toxin is maternally deposited at both protein and RNA levels.

It is found in the secreted. The protein resides in the nematocyst. Neurotoxin that is probably only defensive. Acts as a voltage-gated potassium channel (Kv) inhibitor. In vivo, induces a rapid increase in swimming speed on zebrafish larvae, as well as death which occurs between 2 and 18 hours later. The sequence is that of Toxin NvePTx1 from Nematostella vectensis (Starlet sea anemone).